Here is a 220-residue protein sequence, read N- to C-terminus: Probable nicotinate-nucleotide adenylyltransferase (220 aa).

The protein belongs to the NadD family.

It catalyses the reaction nicotinate beta-D-ribonucleotide + ATP + H(+) = deamido-NAD(+) + diphosphate. Its pathway is cofactor biosynthesis; NAD(+) biosynthesis; deamido-NAD(+) from nicotinate D-ribonucleotide: step 1/1. Functionally, catalyzes the reversible adenylation of nicotinate mononucleotide (NaMN) to nicotinic acid adenine dinucleotide (NaAD). The polypeptide is Probable nicotinate-nucleotide adenylyltransferase (Yersinia enterocolitica serotype O:8 / biotype 1B (strain NCTC 13174 / 8081)).